The chain runs to 400 residues: MMDNMQCGYYNSGSPYNFPSVLGPGAAIGPGPVPLGYCKEPCPTRSLCDPSYIGACGIQPLINPFGPRRAVTTWKINYLVSNRTNQAAHTDPDLINPWGIAIFGNQLWIANGQTDTITNYDLFGNKLLGSITVRNIAQNSSYPTGIAINCTGNFATTNGTLTKSGLFLTCSEHGTVHSYNPQVDPLVSFLVLNEQLTGEIHVFRGLAVAGDVLYLADFFQSKIMVFDSNYNRLLGFPFVDGDTSDPIPISYGPTNIVNIGCYLYVVYARKDPNVPLQAITGAGFGYISIFNLDGTFVRRFTSRGVLNDPWAIIPAPVECGFPPGSLLVSNHGDGRINAFDCNGRYVGPMLNQSGLPVIIDGLRGLAPHYTDFNEIFFTAEVDENIDGLVGSICKDQVIYF.

The protein belongs to the mimivirus R640 family.

It is found in the virion. This is an uncharacterized protein from Acanthamoeba polyphaga (Amoeba).